We begin with the raw amino-acid sequence, 104 residues long: Pterin-4-alpha-carbinolamine dehydratase (104 aa).

An N-acetylalanine modification is found at alanine 2. Residues 61-63 (DHH) and 78-81 (STHE) each bind substrate.

The protein belongs to the pterin-4-alpha-carbinolamine dehydratase family. In terms of assembly, homotetramer and homodimer. The major tissues expressing cDcoH are hypothalamus, kidney and liver.

Its subcellular location is the cytoplasm. The protein localises to the nucleus. It carries out the reaction (4aS,6R)-4a-hydroxy-L-erythro-5,6,7,8-tetrahydrobiopterin = (6R)-L-erythro-6,7-dihydrobiopterin + H2O. In terms of biological role, involved in tetrahydrobiopterin biosynthesis. Seems to both prevent the formation of 7-pterins and accelerate the formation of quinonoid-BH2. Coactivator for HNF1A-dependent transcription. Regulates the dimerization of homeodomain protein HNF1A and enhances its transcriptional activity. Also acts as a coactivator for HNF1B-dependent transcription. The sequence is that of Pterin-4-alpha-carbinolamine dehydratase (PCBD1) from Gallus gallus (Chicken).